Here is a 507-residue protein sequence, read N- to C-terminus: ATP synthase subunit alpha (507 aa).

An ATP-binding site is contributed by 169–176; the sequence is GDRQTGKT.

This sequence belongs to the ATPase alpha/beta chains family. In terms of assembly, F-type ATPases have 2 components, CF(1) - the catalytic core - and CF(0) - the membrane proton channel. CF(1) has five subunits: alpha(3), beta(3), gamma(1), delta(1), epsilon(1). CF(0) has three main subunits: a(1), b(2) and c(9-12). The alpha and beta chains form an alternating ring which encloses part of the gamma chain. CF(1) is attached to CF(0) by a central stalk formed by the gamma and epsilon chains, while a peripheral stalk is formed by the delta and b chains. In this bacterium the a and b subunits are transcribed but do not seem to be translated, thus the ATP synthase consists of the alpha, beta, gamma, delta, epsilon and c subunits.

It localises to the cell membrane. It catalyses the reaction ATP + H2O + 4 H(+)(in) = ADP + phosphate + 5 H(+)(out). Functionally, produces ATP from ADP in the presence of a proton gradient across the membrane. The alpha chain is a regulatory subunit. This Moorella thermoacetica (strain ATCC 39073 / JCM 9320) protein is ATP synthase subunit alpha.